The chain runs to 150 residues: Kirola (150 aa).

At M1 the chain carries N-acetylmethionine.

It belongs to the MLP family. As to quaternary structure, monomer. The N-terminus is blocked.

This chain is Kirola, found in Actinidia deliciosa (Kiwi).